The chain runs to 467 residues: Microtubule-associated tyrosine carboxypeptidase 1 (467 aa).

Residues 1 to 10 show a composition bias toward polar residues; that stretch reads MVLDSGTQVY. Disordered stretches follow at residues 1–40 and 77–111; these read MVLD…PLYP and MRRS…TLRP. Residue histidine 276 participates in Zn(2+) binding. The active-site Nucleophile is the glutamate 277. Residues histidine 281 and glutamate 312 each coordinate Zn(2+).

Belongs to the peptidase MATCAP family. Requires Zn(2+) as cofactor.

The protein localises to the cytoplasm. It localises to the cytoskeleton. It catalyses the reaction C-terminal L-alpha-aminoacyl-L-glutamyl-L-glutamyl-L-tyrosyl-[tubulin] + H2O = C-terminal L-alpha-aminoacyl-L-glutamyl-L-glutamyl-[tubulin] + L-tyrosine. It carries out the reaction C-terminal L-alpha-aminoacyl-L-glutamyl-L-glutamyl-L-phenylalanyl-[tubulin] + H2O = C-terminal L-alpha-aminoacyl-L-glutamyl-L-glutamyl-[tubulin] + L-phenylalanine. In terms of biological role, tyrosine carboxypeptidase that removes the C-terminal tyrosine residue of alpha-tubulin, thereby regulating microtubule dynamics and function. Also able to remove the C-terminal phenylalanine residue of alpha-tubulin TUBA8. Recognizes adjacent tubulin dimers along the same protofilament. This Mus musculus (Mouse) protein is Microtubule-associated tyrosine carboxypeptidase 1.